The sequence spans 633 residues: Peptidoglycan D,D-transpeptidase MrdA (633 aa).

The chain crosses the membrane as a helical span at residues 22–42 (LVAFLGILLLTGVLIANLYNL). Ser-330 functions as the Acyl-ester intermediate in the catalytic mechanism.

This sequence belongs to the transpeptidase family. MrdA subfamily.

The protein localises to the cell inner membrane. The enzyme catalyses Preferential cleavage: (Ac)2-L-Lys-D-Ala-|-D-Ala. Also transpeptidation of peptidyl-alanyl moieties that are N-acyl substituents of D-alanine.. Its pathway is cell wall biogenesis; peptidoglycan biosynthesis. In terms of biological role, catalyzes cross-linking of the peptidoglycan cell wall. This chain is Peptidoglycan D,D-transpeptidase MrdA, found in Escherichia coli O157:H7.